The chain runs to 102 residues: MVSVTEIITYGREAIERIICKYFKDSKIEKILFLPSEEDVKAKYIIGRVGFIRISNTWSGIVVVDGVQIPFVAEVHLNGKIDIYLYPQKDFYLAHLVGELNG.

In terms of biological role, essential for virus function. This is an uncharacterized protein from Saccharolobus solfataricus (Sulfolobus solfataricus).